The sequence spans 448 residues: Adenylyltransferase and sulfurtransferase UBA4 (448 aa).

ATP contacts are provided by residues Gly-88, Asp-109, 116–120 (SNLHR), Lys-133, and 177–178 (DT). Residues Cys-219 and Cys-222 each contribute to the Zn(2+) site. Cys-236 acts as the Glycyl thioester intermediate; for adenylyltransferase activity in catalysis. Zn(2+)-binding residues include Cys-297 and Cys-300. One can recognise a Rhodanese domain in the interval 349 to 446 (QGENSILIDV…WSKEIDSKIP (98 aa)). Residue Cys-405 is the Cysteine persulfide intermediate; for sulfurtransferase activity of the active site.

The protein in the N-terminal section; belongs to the HesA/MoeB/ThiF family. UBA4 subfamily. Requires Zn(2+) as cofactor.

The protein localises to the cytoplasm. The protein resides in the cytosol. It participates in tRNA modification; 5-methoxycarbonylmethyl-2-thiouridine-tRNA biosynthesis. In terms of biological role, plays a central role in 2-thiolation of mcm(5)S(2)U at tRNA wobble positions of cytosolic tRNA(Lys), tRNA(Glu) and tRNA(Gln). Acts by mediating the C-terminal thiocarboxylation of sulfur carrier URM1. Its N-terminus first activates URM1 as acyl-adenylate (-COAMP), then the persulfide sulfur on the catalytic cysteine is transferred to URM1 to form thiocarboxylation (-COSH) of its C-terminus. The reaction probably involves hydrogen sulfide that is generated from the persulfide intermediate and that acts as a nucleophile towards URM1. Subsequently, a transient disulfide bond is formed. Does not use thiosulfate as sulfur donor; NFS1 probably acting as a sulfur donor for thiocarboxylation reactions. Prior mcm(5) tRNA modification by the elongator complex is required for 2-thiolation. May also be involved in protein urmylation. In Debaryomyces hansenii (strain ATCC 36239 / CBS 767 / BCRC 21394 / JCM 1990 / NBRC 0083 / IGC 2968) (Yeast), this protein is Adenylyltransferase and sulfurtransferase UBA4.